The sequence spans 255 residues: Enkurin (255 aa).

Positions 1 to 10 (MDSPCTSESI) are enriched in polar residues. 2 disordered regions span residues 1–25 (MDSP…PQHP) and 67–96 (SKEK…DHPV). Residues 73–83 (PPKKKFNRCSP) show a composition bias toward basic residues. Positions 83–89 (PKKPAVP) match the SH3-binding motif. Residues 160–252 (KRNEDVKKAQ…VIEKHKIIYI (93 aa)) form the Enkurin domain. The interaction with TRPC proteins stretch occupies residues 160–255 (KRNEDVKKAQ…KHKIIYIANK (96 aa)). Residues 176-187 (IQENLKKAAMKR) form the IQ domain.

In terms of assembly, microtubule inner protein component of sperm flagellar doublet microtubules. Binds calmodulin via its IQ domain. Interacts with TRPC1, TRPC2, TRPC5, but not TRPC3. Interacts with CFAP45. As to expression, high expression in testis and vomeronasal organ and lower expression in ovary, heart, lung, and brain. Not expressed in other tissues.

The protein localises to the cytoplasm. Its subcellular location is the cytoskeleton. The protein resides in the cilium axoneme. It is found in the flagellum axoneme. Functionally, adapter that functions to localize a calcium-sensitive signal transduction machinery in sperm to a calcium-permeable ion channel. Microtubule inner protein (MIP) part of the dynein-decorated doublet microtubules (DMTs) in cilia axoneme, which is required for motile cilia beating. This chain is Enkurin (Enkur), found in Mus musculus (Mouse).